We begin with the raw amino-acid sequence, 108 residues long: ATP synthase epsilon chain (108 aa).

This sequence belongs to the ATPase epsilon chain family. F-type ATPases have 2 components, CF(1) - the catalytic core - and CF(0) - the membrane proton channel. CF(1) has five subunits: alpha(3), beta(3), gamma(1), delta(1), epsilon(1). CF(0) has three main subunits: a, b and c.

The protein resides in the cell inner membrane. Produces ATP from ADP in the presence of a proton gradient across the membrane. In Thermotoga maritima (strain ATCC 43589 / DSM 3109 / JCM 10099 / NBRC 100826 / MSB8), this protein is ATP synthase epsilon chain.